We begin with the raw amino-acid sequence, 333 residues long: D-fructose 1,6-bisphosphatase class 2/sedoheptulose 1,7-bisphosphatase (333 aa).

Mn(2+) contacts are provided by aspartate 33, glutamate 57, aspartate 85, and glutamate 88. Residues glutamate 88–threonine 90, tyrosine 119, arginine 164–arginine 166, and aspartate 186–aspartate 188 each bind substrate. Glutamate 213 contributes to the Mn(2+) binding site.

Belongs to the FBPase class 2 family. In terms of assembly, homotetramer. The cofactor is Mn(2+).

The enzyme catalyses beta-D-fructose 1,6-bisphosphate + H2O = beta-D-fructose 6-phosphate + phosphate. The catalysed reaction is D-sedoheptulose 1,7-bisphosphate + H2O = D-sedoheptulose 7-phosphate + phosphate. It participates in carbohydrate biosynthesis; Calvin cycle. Catalyzes the hydrolysis of fructose 1,6-bisphosphate (Fru 1,6-P2) and sedoheptulose 1,7-bisphosphate (Sed 1,7-P2) to fructose 6-phosphate and sedoheptulose 7-phosphate, respectively. This chain is D-fructose 1,6-bisphosphatase class 2/sedoheptulose 1,7-bisphosphatase, found in Prochlorococcus marinus (strain MIT 9301).